Consider the following 396-residue polypeptide: Elongation factor Tu 1 (396 aa).

Residues 10-206 (KPHVNVGTIG…ALDTYIPTPE (197 aa)) form the tr-type G domain. Residues 19-26 (GHVDHGKT) are G1. 19–26 (GHVDHGKT) contacts GTP. Threonine 26 provides a ligand contact to Mg(2+). Residues 60–64 (GITIN) are G2. Positions 81-84 (DCPG) are G3. Residues 81–85 (DCPGH) and 136–139 (NKCD) each bind GTP. The G4 stretch occupies residues 136-139 (NKCD). A G5 region spans residues 174-176 (SAK).

This sequence belongs to the TRAFAC class translation factor GTPase superfamily. Classic translation factor GTPase family. EF-Tu/EF-1A subfamily. As to quaternary structure, monomer.

Its subcellular location is the cytoplasm. The catalysed reaction is GTP + H2O = GDP + phosphate + H(+). Functionally, GTP hydrolase that promotes the GTP-dependent binding of aminoacyl-tRNA to the A-site of ribosomes during protein biosynthesis. This chain is Elongation factor Tu 1, found in Acidovorax sp. (strain JS42).